A 296-amino-acid polypeptide reads, in one-letter code: Nitrogenase iron protein (296 aa).

10–17 (GKGGIGKS) provides a ligand contact to ATP. Cys98 lines the [4Fe-4S] cluster pocket. ADP-ribosylarginine; by dinitrogenase reductase ADP-ribosyltransferase is present on Arg101. Residue Cys133 coordinates [4Fe-4S] cluster.

The protein belongs to the NifH/BchL/ChlL family. Homodimer. The cofactor is [4Fe-4S] cluster. In terms of processing, the reversible ADP-ribosylation of Arg-101 inactivates the nitrogenase reductase and regulates nitrogenase activity.

It catalyses the reaction N2 + 8 reduced [2Fe-2S]-[ferredoxin] + 16 ATP + 16 H2O = H2 + 8 oxidized [2Fe-2S]-[ferredoxin] + 2 NH4(+) + 16 ADP + 16 phosphate + 6 H(+). The key enzymatic reactions in nitrogen fixation are catalyzed by the nitrogenase complex, which has 2 components: the iron protein and the molybdenum-iron protein. The chain is Nitrogenase iron protein from Magnetococcus marinus (strain ATCC BAA-1437 / JCM 17883 / MC-1).